The following is a 395-amino-acid chain: Acetyl-CoA acetyltransferase (395 aa).

Residue C90 is the Acyl-thioester intermediate of the active site. CoA contacts are provided by Y185 and K230. Position 185 (Y185) interacts with K(+). K(+)-binding residues include A246, A247, and A249. A CoA-binding site is contributed by S250. V347 contacts K(+). Residues H351 and C381 each act as proton acceptor in the active site.

It belongs to the thiolase-like superfamily. Thiolase family. In terms of assembly, homotetramer.

Its subcellular location is the cytoplasm. The enzyme catalyses 2 acetyl-CoA = acetoacetyl-CoA + CoA. It participates in metabolic intermediate biosynthesis; (R)-mevalonate biosynthesis; (R)-mevalonate from acetyl-CoA: step 1/3. Functionally, acetyl-CoA acetyltransferase; part of the first module of ergosterol biosynthesis pathway that includes the early steps of the pathway, conserved across all eukaryotes, and which results in the formation of mevalonate from acetyl-coenzyme A (acetyl-CoA). Erg10 catalyzes the formation of acetoacetyl-CoA from acetyl-CoA. The first module starts with the action of the cytosolic acetyl-CoA acetyltransferase eg10 that catalyzes the formation of acetoacetyl-CoA. The hydroxymethylglutaryl-CoA synthases erg13 then condenses acetyl-CoA with acetoacetyl-CoA to form HMG-CoA. The rate-limiting step of the early module is the reduction to mevalonate by the 3-hydroxy-3-methylglutaryl-coenzyme A (HMG-CoA) reductases hcs1. The sequence is that of Acetyl-CoA acetyltransferase (erg10) from Schizosaccharomyces pombe (strain 972 / ATCC 24843) (Fission yeast).